The following is a 168-amino-acid chain: Crossover junction endodeoxyribonuclease RuvC (168 aa).

Catalysis depends on residues D11, E71, and D144. Residues D11, E71, and D144 each coordinate Mg(2+).

This sequence belongs to the RuvC family. In terms of assembly, homodimer which binds Holliday junction (HJ) DNA. The HJ becomes 2-fold symmetrical on binding to RuvC with unstacked arms; it has a different conformation from HJ DNA in complex with RuvA. In the full resolvosome a probable DNA-RuvA(4)-RuvB(12)-RuvC(2) complex forms which resolves the HJ. The cofactor is Mg(2+).

It is found in the cytoplasm. It catalyses the reaction Endonucleolytic cleavage at a junction such as a reciprocal single-stranded crossover between two homologous DNA duplexes (Holliday junction).. Its function is as follows. The RuvA-RuvB-RuvC complex processes Holliday junction (HJ) DNA during genetic recombination and DNA repair. Endonuclease that resolves HJ intermediates. Cleaves cruciform DNA by making single-stranded nicks across the HJ at symmetrical positions within the homologous arms, yielding a 5'-phosphate and a 3'-hydroxyl group; requires a central core of homology in the junction. The consensus cleavage sequence is 5'-(A/T)TT(C/G)-3'. Cleavage occurs on the 3'-side of the TT dinucleotide at the point of strand exchange. HJ branch migration catalyzed by RuvA-RuvB allows RuvC to scan DNA until it finds its consensus sequence, where it cleaves and resolves the cruciform DNA. This is Crossover junction endodeoxyribonuclease RuvC from Protochlamydia amoebophila (strain UWE25).